Reading from the N-terminus, the 693-residue chain is UvrABC system protein B (693 aa).

Residues 35-188 form the Helicase ATP-binding domain; sequence ERIKNGEKDV…DDLLRKFVSM (154 aa). 48–55 contributes to the ATP binding site; sequence GATGTGKS. The Beta-hairpin motif lies at 101–124; that stretch reads YYDYYQPEAYVAQTDTFIEKDSSV. Positions 438–604 constitute a Helicase C-terminal domain; that stretch reads QIDDLLGEIK…PLRKKIADIT (167 aa). Positions 648–683 constitute a UVR domain; the sequence is VGLIEQLTEQMHAAAGELQFELAARLRDEVGELKKE.

It belongs to the UvrB family. As to quaternary structure, forms a heterotetramer with UvrA during the search for lesions. Interacts with UvrC in an incision complex.

It localises to the cytoplasm. Its function is as follows. The UvrABC repair system catalyzes the recognition and processing of DNA lesions. A damage recognition complex composed of 2 UvrA and 2 UvrB subunits scans DNA for abnormalities. Upon binding of the UvrA(2)B(2) complex to a putative damaged site, the DNA wraps around one UvrB monomer. DNA wrap is dependent on ATP binding by UvrB and probably causes local melting of the DNA helix, facilitating insertion of UvrB beta-hairpin between the DNA strands. Then UvrB probes one DNA strand for the presence of a lesion. If a lesion is found the UvrA subunits dissociate and the UvrB-DNA preincision complex is formed. This complex is subsequently bound by UvrC and the second UvrB is released. If no lesion is found, the DNA wraps around the other UvrB subunit that will check the other stand for damage. The protein is UvrABC system protein B of Arthrobacter sp. (strain FB24).